The following is a 498-amino-acid chain: MRTNPTTSSPVVSTLEEKNLGRIAQIIGPVLDVVFPPGKMPNIYNALVVKGRDTVGQQINVTCEVQQLLGNNRVRAVAMSATDGLMRGMEVIDTGAPLSVPVGGATLGRIFNVLGEPVDNLGPVDTRTTSPIHRSAPAFIQLDTKLSIFETGIKVVDLLAPYRRGGKIGLFGGAGVGKTVLIMELINNIAKAHGGVSVFGGVGERTREGNDLYMEMKESGVINEKNIAESKVALVYGQMNEPPGARMRVGLTALTMAEYFRDVNEQDVLLFIDNIFRFVQAGSEVSALLGRMPSAVGYQPTLSTEMGSLQERITSTKEGSITSIQAVYVPADDLTDPAPATTFAHLDATTVLSRVLAAKGIYPAVDPLDSTSTMLQPRIVGEEHYETAQRVKQTSQRYKELQDIIAILGLDELSEEDRLTVARARKIERFLSQPFFVAEVFTGSPGKYVGLAETIRGFQLILSGELDGLPEQAFYLVGNIDEATAKAMNLEVESKLKK.

ATP is bound at residue 172 to 179 (GGAGVGKT).

It belongs to the ATPase alpha/beta chains family. As to quaternary structure, F-type ATPases have 2 components, CF(1) - the catalytic core - and CF(0) - the membrane proton channel. CF(1) has five subunits: alpha(3), beta(3), gamma(1), delta(1), epsilon(1). CF(0) has four main subunits: a(1), b(1), b'(1) and c(9-12).

The protein resides in the plastid. It localises to the chloroplast thylakoid membrane. The enzyme catalyses ATP + H2O + 4 H(+)(in) = ADP + phosphate + 5 H(+)(out). Produces ATP from ADP in the presence of a proton gradient across the membrane. The catalytic sites are hosted primarily by the beta subunits. This chain is ATP synthase subunit beta, chloroplastic, found in Hyphaene coriacea (Ilala palm).